The chain runs to 440 residues: Thymidine phosphorylase (440 aa).

This sequence belongs to the thymidine/pyrimidine-nucleoside phosphorylase family. In terms of assembly, homodimer.

It carries out the reaction thymidine + phosphate = 2-deoxy-alpha-D-ribose 1-phosphate + thymine. The protein operates within pyrimidine metabolism; dTMP biosynthesis via salvage pathway; dTMP from thymine: step 1/2. In terms of biological role, the enzymes which catalyze the reversible phosphorolysis of pyrimidine nucleosides are involved in the degradation of these compounds and in their utilization as carbon and energy sources, or in the rescue of pyrimidine bases for nucleotide synthesis. The sequence is that of Thymidine phosphorylase from Klebsiella pneumoniae (strain 342).